We begin with the raw amino-acid sequence, 455 residues long: MHILVVGVDYKSAPIEIREKVSFQPNELAEAMVQLKEEKSILENIIVSTCNRTEIYAVVDQLHTGRYYIKKFLADWFQLSKEELSPFLTFYESDAAVEHLFRVACGLDSMVIGETQILGQVRDSFKTAQQEKTIGTIFNELFKQAVTVGKRTHAETDIGSNAVSVSYAAVELAKKIFGNLSSKHILILGAGKMGELAAENLHGQGIGKVTVINRTYLKAKELADRFSGEARSLNQLESALAEADILISSTGASEFVVSKEMMENANKLRKGRPLFMVDIAVPRDLDPALNDLEGVFLYDIDDLEGIVEANMKERRETAEKVELLIEETIVEFKQWMNTLGVVPVISALREKALAIQSETMDSIERKLPHLSTREKKLLNKHTKSIINQMLRDPILKVKELAADADSEEKLALFMQIFDIEEAAGRQMMKTVESSQKVHSFKKAESKAGFSPLVSE.

Residues T49–R52, S109, E114–Q116, and Q120 contribute to the substrate site. Catalysis depends on C50, which acts as the Nucleophile. G189–G194 is an NADP(+) binding site.

Belongs to the glutamyl-tRNA reductase family. In terms of assembly, homodimer.

It catalyses the reaction (S)-4-amino-5-oxopentanoate + tRNA(Glu) + NADP(+) = L-glutamyl-tRNA(Glu) + NADPH + H(+). It participates in porphyrin-containing compound metabolism; protoporphyrin-IX biosynthesis; 5-aminolevulinate from L-glutamyl-tRNA(Glu): step 1/2. Catalyzes the NADPH-dependent reduction of glutamyl-tRNA(Glu) to glutamate 1-semialdehyde (GSA). This is Glutamyl-tRNA reductase from Bacillus subtilis (strain 168).